We begin with the raw amino-acid sequence, 158 residues long: Phosphopantetheine adenylyltransferase (158 aa).

Threonine 10 lines the substrate pocket. ATP is bound by residues 10–11 (TF) and histidine 18. The substrate site is built by lysine 42, leucine 74, and arginine 88. ATP contacts are provided by residues 89 to 91 (GLR), glutamate 99, and 124 to 130 (NSFISST).

It belongs to the bacterial CoaD family. Homohexamer. Mg(2+) is required as a cofactor.

The protein resides in the cytoplasm. The enzyme catalyses (R)-4'-phosphopantetheine + ATP + H(+) = 3'-dephospho-CoA + diphosphate. The protein operates within cofactor biosynthesis; coenzyme A biosynthesis; CoA from (R)-pantothenate: step 4/5. In terms of biological role, reversibly transfers an adenylyl group from ATP to 4'-phosphopantetheine, yielding dephospho-CoA (dPCoA) and pyrophosphate. The polypeptide is Phosphopantetheine adenylyltransferase (Shewanella sediminis (strain HAW-EB3)).